The sequence spans 514 residues: Cobyric acid synthase (514 aa).

Positions 258–458 constitute a GATase cobBQ-type domain; that stretch reads ALMVGVVRLP…IHGIFDNDGL (201 aa). Residue cysteine 339 is the Nucleophile of the active site. Histidine 450 is a catalytic residue.

Belongs to the CobB/CobQ family. CobQ subfamily.

It functions in the pathway cofactor biosynthesis; adenosylcobalamin biosynthesis. Functionally, catalyzes amidations at positions B, D, E, and G on adenosylcobyrinic A,C-diamide. NH(2) groups are provided by glutamine, and one molecule of ATP is hydrogenolyzed for each amidation. The chain is Cobyric acid synthase from Syntrophobacter fumaroxidans (strain DSM 10017 / MPOB).